The following is a 137-amino-acid chain: Ribosome-binding factor A (137 aa).

A disordered region spans residues Gln114–Glu137. The span at Asp117–Arg127 shows a compositional bias: basic and acidic residues. Acidic residues predominate over residues Pro128 to Glu137.

The protein belongs to the RbfA family. In terms of assembly, monomer. Binds 30S ribosomal subunits, but not 50S ribosomal subunits or 70S ribosomes.

Its subcellular location is the cytoplasm. One of several proteins that assist in the late maturation steps of the functional core of the 30S ribosomal subunit. Associates with free 30S ribosomal subunits (but not with 30S subunits that are part of 70S ribosomes or polysomes). Required for efficient processing of 16S rRNA. May interact with the 5'-terminal helix region of 16S rRNA. This is Ribosome-binding factor A from Alcanivorax borkumensis (strain ATCC 700651 / DSM 11573 / NCIMB 13689 / SK2).